A 137-amino-acid polypeptide reads, in one-letter code: UPF0148 protein MJ0890 (137 aa).

Belongs to the UPF0148 family.

This Methanocaldococcus jannaschii (strain ATCC 43067 / DSM 2661 / JAL-1 / JCM 10045 / NBRC 100440) (Methanococcus jannaschii) protein is UPF0148 protein MJ0890.